The sequence spans 1012 residues: 5'-3' exoribonuclease 2 (1012 aa).

Residues 264 to 281 (GKCFLCGQEGHRAADCEG) form a CCHC-type zinc finger. 3 disordered regions span residues 411–439 (VQQR…AQAS), 888–976 (TFKD…QRQV), and 990–1012 (QRKK…PKTA). A compositionally biased stretch (basic and acidic residues) spans 415-433 (QSERFRRDKARDKARDNAR). Polar residues predominate over residues 904–914 (ITPKKMNSPQR). Composition is skewed to basic and acidic residues over residues 918-928 (WKKDETPQSRE) and 950-962 (PQRE…KKEN). A compositionally biased stretch (basic residues) spans 990–1002 (QRKKEKYLRKKAK).

It belongs to the 5'-3' exonuclease family. XRN2/RAT1 subfamily. Expressed in roots, leaves, stems and flowers.

Its subcellular location is the nucleus. Its function is as follows. Possesses 5'-&gt;3' exoribonuclease activity. Acts as an endogenous post-transcriptional gene silencing (PTGS) suppressor. Degrades miRNA-derived loops, excised during miRNA maturation in the nucleus. Involved in pre-rRNA processing. Involved in the primary exonucleolytic shortening of the 5' external transcribed spacer (5'ETS), required for endonucleolytic processing at site P by the U3 snoRNP complex. Involved with XRN3 in the 5'-end processing of 5.8S and 25S rRNAs. Contributes with XRN3 to polyadenylation-dependent nuclear RNA surveillance. Involved in the degradation of aberrant polyadenylated pre-rRNA through 5'-end processing. The chain is 5'-3' exoribonuclease 2 from Arabidopsis thaliana (Mouse-ear cress).